The sequence spans 737 residues: Serine/threonine-protein kinase dst1 (737 aa).

The region spanning 29–281 is the Protein kinase domain; that stretch reads YHIQERLGKG…AKELLNHEFI (253 aa). ATP is bound by residues 35 to 43 and K58; that span reads LGKGSFGQV. The active-site Proton acceptor is the D149. Disordered stretches follow at residues 305–356, 372–475, 491–559, and 575–631; these read SMFE…SNNY, KDDA…TTDQ, KPIT…ISNN, and NNNI…ESLS. Low complexity-rich tracts occupy residues 334 to 345, 401 to 410, 425 to 444, and 454 to 473; these read NNNTVTNYSTVI, SSCSSSSSSS, PITNSPKISPISSNNINKIP, and ATTTTTTTTTTTTTAASTTT. The span at 491 to 503 shows a compositional bias: polar residues; it reads KPITSSNSTSVTP. Residues 510-525 are compositionally biased toward low complexity; it reads SNNTTTTSNINTPIKP. Polar residues-rich tracts occupy residues 529 to 554 and 585 to 596; these read LKKSNSNTPVQLKTSGDKTPTTTPLK and SPTTGQKIIKTN. Low complexity predominate over residues 597-615; the sequence is SGGVLKSSGGLSSKRSPSS.

The protein belongs to the protein kinase superfamily. STE Ser/Thr protein kinase family. STE20 subfamily. The cofactor is Mg(2+).

It carries out the reaction L-seryl-[protein] + ATP = O-phospho-L-seryl-[protein] + ADP + H(+). The catalysed reaction is L-threonyl-[protein] + ATP = O-phospho-L-threonyl-[protein] + ADP + H(+). This chain is Serine/threonine-protein kinase dst1, found in Dictyostelium discoideum (Social amoeba).